We begin with the raw amino-acid sequence, 192 residues long: E3 ubiquitin-protein ligase RNF185 (192 aa).

Over residues Met1 to Glu13 the composition is skewed to polar residues. The interval Met1–Ser30 is disordered. Residues Met1 to Asp130 are Cytoplasmic-facing. Residues Asn14–Thr27 show a composition bias toward low complexity. The interval Glu29–Lys80 is required for ubiquitin ligase activity and protection against ER stress-induced cell death. The RING-type zinc-finger motif lies at Cys39–Lys80. The interval Pro90–Phe123 is disordered. Residues Gly131–Phe151 form a helical membrane-spanning segment. The Mitochondrial intermembrane portion of the chain corresponds to Asn152 to Glu171. Residues Gln172–Ala192 form a helical membrane-spanning segment.

As to quaternary structure, interacts with ATG5 and BNIP1. As to expression, ubiquitously expressed with high expression in testis.

It is found in the mitochondrion outer membrane. The protein localises to the endoplasmic reticulum membrane. The enzyme catalyses S-ubiquitinyl-[E2 ubiquitin-conjugating enzyme]-L-cysteine + [acceptor protein]-L-lysine = [E2 ubiquitin-conjugating enzyme]-L-cysteine + N(6)-ubiquitinyl-[acceptor protein]-L-lysine.. It participates in protein modification; protein ubiquitination. Functionally, E3 ubiquitin-protein ligase that regulates selective mitochondrial autophagy by mediating 'Lys-63'-linked polyubiquitination of BNIP1. Acts in the endoplasmic reticulum (ER)-associated degradation (ERAD) pathway, which targets misfolded proteins that accumulate in the endoplasmic reticulum (ER) for ubiquitination and subsequent proteasome-mediated degradation. Protects cells from ER stress-induced apoptosis. Responsible for the cotranslational ubiquitination and degradation of CFTR in the ERAD pathway. Also acts as a regulator of the innate antiviral response by catalyzing 'Lys-27'-linked polyubiquitination of CGAS, thereby promoting CGAS cyclic GMP-AMP synthase activity. Preferentially associates with the E2 enzymes UBE2J1 and UBE2J2. This Mus musculus (Mouse) protein is E3 ubiquitin-protein ligase RNF185 (Rnf185).